We begin with the raw amino-acid sequence, 237 residues long: RNA-binding protein 38 (237 aa).

The interval 1–24 (MLLQPACSPSVFPRPSAAPSAMHG) is disordered. In terms of domain architecture, RRM spans 32–109 (TKIFVGGLPY…RKANVNLAYL (78 aa)).

It belongs to the RBM38 family. Expressed in cardiac and skeletal muscle tissues.

It is found in the cytoplasm. The protein resides in the cytosol. Its subcellular location is the nucleus. In terms of biological role, RNA-binding protein that specifically bind the 3'-UTR of CDKN1A transcripts, leading to maintain the stability of CDKN1A transcripts, thereby acting as a mediator of the p53/TP53 family to regulate CDKN1A. CDKN1A is a cyclin-dependent kinase inhibitor transcriptionally regulated by the p53/TP53 family to induce cell cycle arrest. Has the ability to induce cell cycle arrest in G1 and maintain the stability of CDKN1A transcripts induced by p53/TP53. Also acts as a mRNA splicing factor. Specifically regulates the expression of FGFR2-IIIb, an epithelial cell-specific isoform of FGFR2. Plays a role in myogenic differentiation. This chain is RNA-binding protein 38 (Rbm38), found in Mus musculus (Mouse).